The primary structure comprises 86 residues: UPF0512 protein V (86 aa).

It belongs to the UPF0512 family.

This chain is UPF0512 protein V, found in Dictyostelium discoideum (Social amoeba).